Reading from the N-terminus, the 376-residue chain is MPARRSAARIDFAGSPRPTLGVEWEFALVDSQTRDLSNEATAVIAEIGENPRVHKELLRNTVEIVSGICECTAEAMQDLRDTLGPARQIVRDRGMELFCAGTHPFARWSAQKLTDAPRYAELIKRTQWWGRQMLIWGVHVHVGIRSAHKVMPIMTSLLNYYPHLLALSASSPWWGGEDTGYASNRAMMFQQLPTAGLPFHFQRWAEFEGFVYDQKKTGIIDHMDEIRWDIRPSPHLGTLEVRICDGVSNLRELGALVALTHCLIVDLDRRLDAGETLPTMPPWHVQENKWRAARYGLDAVIILDADSNERLVTDDLADVLTRLEPVAKSLNCADELAAVSDIYRDGASYQRQLRVAQQHDGDLRAVVDALVAELVI.

It belongs to the glutamate--cysteine ligase type 2 family. YbdK subfamily.

It catalyses the reaction L-cysteine + L-glutamate + ATP = gamma-L-glutamyl-L-cysteine + ADP + phosphate + H(+). Functionally, ATP-dependent carboxylate-amine ligase which exhibits weak glutamate--cysteine ligase activity. The sequence is that of Putative glutamate--cysteine ligase 2 from Mycobacterium bovis (strain ATCC BAA-935 / AF2122/97).